The following is a 259-amino-acid chain: Ribonuclease HII (259 aa).

The interval 1–26 (MLSTPPKLPSAHGPVHFPRRSGTGMN) is disordered. Residues 55 to 243 (APVAGADEAG…VRAQQLVLFE (189 aa)) enclose the RNase H type-2 domain. Positions 61, 62, and 152 each coordinate a divalent metal cation.

The protein belongs to the RNase HII family. It depends on Mn(2+) as a cofactor. The cofactor is Mg(2+).

Its subcellular location is the cytoplasm. It catalyses the reaction Endonucleolytic cleavage to 5'-phosphomonoester.. Endonuclease that specifically degrades the RNA of RNA-DNA hybrids. This Azorhizobium caulinodans (strain ATCC 43989 / DSM 5975 / JCM 20966 / LMG 6465 / NBRC 14845 / NCIMB 13405 / ORS 571) protein is Ribonuclease HII.